The primary structure comprises 73 residues: uncharacterized protein (73 aa).

This is an uncharacterized protein from Sinorhizobium fredii (strain NBRC 101917 / NGR234).